The sequence spans 452 residues: MGRLFGTDGVRGVANADLTAELALGLSVAAAHVLAEAGTFEGHRPVAVVGRDPRASGEFLEAAVVAGLASAGVDVLLVGVLPTPAVAHLTGALGADLGVMLSASHNAMPDNGIKFFARGGHKLADDLEDRIEAVYEEHRTGAPWDRPTGAGVGRVTSYGEGADQYVAHLMSVLPNRLDGIKVVLDEAHGAAARVSPDAFTRAGAEIITIGAEPDGLNINDGCGSTHLAKLRAAVVEHGADLGIAHDGDADRCLAVDHTGAEVDGDQILAVLALAMRERSALRSDTVVATVMSNLGFKLAMEREGLSFVQTAVGDRYVLEEMKEHGYALGGEQSGHVIILDHATTGDGTLTGLLLAARVAQTGRTLQDLASVMERLPQVLVNVPDVDRARVKTSAELATAVAEAERELGATGRVLLRPSGTEPLVRVMVEAADIEQARSVAGRLADAVKSALG.

Catalysis depends on Ser-104, which acts as the Phosphoserine intermediate. Mg(2+)-binding residues include Ser-104, Asp-246, Asp-248, and Asp-250. Phosphoserine is present on Ser-104.

The protein belongs to the phosphohexose mutase family. Mg(2+) serves as cofactor. Activated by phosphorylation.

It catalyses the reaction alpha-D-glucosamine 1-phosphate = D-glucosamine 6-phosphate. In terms of biological role, catalyzes the conversion of glucosamine-6-phosphate to glucosamine-1-phosphate. The protein is Phosphoglucosamine mutase of Streptomyces avermitilis (strain ATCC 31267 / DSM 46492 / JCM 5070 / NBRC 14893 / NCIMB 12804 / NRRL 8165 / MA-4680).